The following is a 206-amino-acid chain: Imidazoleglycerol-phosphate dehydratase (206 aa).

Belongs to the imidazoleglycerol-phosphate dehydratase family.

It localises to the cytoplasm. The enzyme catalyses D-erythro-1-(imidazol-4-yl)glycerol 3-phosphate = 3-(imidazol-4-yl)-2-oxopropyl phosphate + H2O. The protein operates within amino-acid biosynthesis; L-histidine biosynthesis; L-histidine from 5-phospho-alpha-D-ribose 1-diphosphate: step 6/9. The polypeptide is Imidazoleglycerol-phosphate dehydratase (Cutibacterium acnes (strain DSM 16379 / KPA171202) (Propionibacterium acnes)).